The chain runs to 379 residues: Pectin lyase B (379 aa).

A signal peptide spans 1–19 (MRLHAPILSLLAAAASTSA). 2 cysteine pairs are disulfide-bonded: C82–C101 and C91–C225. N128 is a glycosylation site (N-linked (GlcNAc...) asparagine). Residue R255 is part of the active site. A disulfide bridge connects residues C322 and C330.

Belongs to the polysaccharide lyase 1 family.

The protein localises to the secreted. It carries out the reaction Eliminative cleavage of (1-&gt;4)-alpha-D-galacturonan methyl ester to give oligosaccharides with 4-deoxy-6-O-methyl-alpha-D-galact-4-enuronosyl groups at their non-reducing ends.. Functionally, pectinolytic enzymes consist of four classes of enzymes: pectin lyase, polygalacturonase, pectin methylesterase and rhamnogalacturonase. Among pectinolytic enzymes, pectin lyase is the most important in depolymerization of pectin, since it cleaves internal glycosidic bonds of highly methylated pectins. This Emericella nidulans (strain FGSC A4 / ATCC 38163 / CBS 112.46 / NRRL 194 / M139) (Aspergillus nidulans) protein is Pectin lyase B (pelB).